The following is an 85-amino-acid chain: U4-theraphotoxin-Hhn1d (85 aa).

The first 22 residues, 1-22 (MKVTLIAILTCAAVLVLHTTAA), serve as a signal peptide directing secretion. Positions 23–48 (EELEAESQLMEVGMPDTELAAVDEER) are excised as a propeptide. Disulfide bonds link C52/C66, C56/C77, and C71/C82.

Belongs to the neurotoxin 12 (Hwtx-2) family. 02 (Hwtx-2) subfamily. As to expression, expressed by the venom gland.

Its subcellular location is the secreted. In terms of biological role, postsynaptic neurotoxin. The protein is U4-theraphotoxin-Hhn1d of Cyriopagopus hainanus (Chinese bird spider).